The primary structure comprises 60 residues: UPF0509 protein Ent638_2183 (60 aa).

Belongs to the UPF0509 family.

The chain is UPF0509 protein Ent638_2183 from Enterobacter sp. (strain 638).